The chain runs to 319 residues: UDP-3-O-acylglucosamine N-acyltransferase (319 aa).

The active-site Proton acceptor is His230.

It belongs to the transferase hexapeptide repeat family. LpxD subfamily. As to quaternary structure, homotrimer.

The catalysed reaction is a UDP-3-O-[(3R)-3-hydroxyacyl]-alpha-D-glucosamine + a (3R)-hydroxyacyl-[ACP] = a UDP-2-N,3-O-bis[(3R)-3-hydroxyacyl]-alpha-D-glucosamine + holo-[ACP] + H(+). It participates in bacterial outer membrane biogenesis; LPS lipid A biosynthesis. Functionally, catalyzes the N-acylation of UDP-3-O-acylglucosamine using 3-hydroxyacyl-ACP as the acyl donor. Is involved in the biosynthesis of lipid A, a phosphorylated glycolipid that anchors the lipopolysaccharide to the outer membrane of the cell. The polypeptide is UDP-3-O-acylglucosamine N-acyltransferase (Campylobacter lari (strain RM2100 / D67 / ATCC BAA-1060)).